A 383-amino-acid chain; its full sequence is Lipid-A-disaccharide synthase (383 aa).

This sequence belongs to the LpxB family.

The catalysed reaction is 2-N,3-O-bis[(3R)-3-hydroxytetradecanoyl]-alpha-D-glucosaminyl 1-phosphate + UDP-2-N,3-O-bis[(3R)-3-hydroxytetradecanoyl]-alpha-D-glucosamine = lipid A disaccharide (E. coli) + UDP + H(+). The enzyme catalyses a lipid X + a UDP-2-N,3-O-bis[(3R)-3-hydroxyacyl]-alpha-D-glucosamine = a lipid A disaccharide + UDP + H(+). It participates in glycolipid biosynthesis; lipid IV(A) biosynthesis; lipid IV(A) from (3R)-3-hydroxytetradecanoyl-[acyl-carrier-protein] and UDP-N-acetyl-alpha-D-glucosamine: step 5/6. Condensation of UDP-2,3-diacylglucosamine and 2,3-diacylglucosamine-1-phosphate to form lipid A disaccharide, a precursor of lipid A, a phosphorylated glycolipid that anchors the lipopolysaccharide to the outer membrane of the cell. The chain is Lipid-A-disaccharide synthase from Pectobacterium carotovorum subsp. carotovorum (strain PC1).